We begin with the raw amino-acid sequence, 421 residues long: Gamma-glutamyl phosphate reductase (421 aa).

This sequence belongs to the gamma-glutamyl phosphate reductase family.

Its subcellular location is the cytoplasm. The enzyme catalyses L-glutamate 5-semialdehyde + phosphate + NADP(+) = L-glutamyl 5-phosphate + NADPH + H(+). It functions in the pathway amino-acid biosynthesis; L-proline biosynthesis; L-glutamate 5-semialdehyde from L-glutamate: step 2/2. Catalyzes the NADPH-dependent reduction of L-glutamate 5-phosphate into L-glutamate 5-semialdehyde and phosphate. The product spontaneously undergoes cyclization to form 1-pyrroline-5-carboxylate. The protein is Gamma-glutamyl phosphate reductase of Herminiimonas arsenicoxydans.